The chain runs to 444 residues: Adenylosuccinate synthetase (444 aa).

GTP is bound by residues 12-18 (GDEGKGK) and 40-42 (GHT). Asp13 acts as the Proton acceptor in catalysis. Residues Asp13 and Gly40 each contribute to the Mg(2+) site. IMP-binding positions include 13 to 16 (DEGK), 38 to 41 (NAGH), Thr128, Arg142, Gln223, Thr238, and Arg302. The Proton donor role is filled by His41. 298–304 (TTTGRRR) serves as a coordination point for substrate. Residues Arg304, 330–332 (KLD), and 412–414 (SLG) each bind GTP.

This sequence belongs to the adenylosuccinate synthetase family. In terms of assembly, homodimer. It depends on Mg(2+) as a cofactor.

The protein localises to the cytoplasm. The enzyme catalyses IMP + L-aspartate + GTP = N(6)-(1,2-dicarboxyethyl)-AMP + GDP + phosphate + 2 H(+). It functions in the pathway purine metabolism; AMP biosynthesis via de novo pathway; AMP from IMP: step 1/2. In terms of biological role, plays an important role in the de novo pathway of purine nucleotide biosynthesis. Catalyzes the first committed step in the biosynthesis of AMP from IMP. The chain is Adenylosuccinate synthetase from Synechococcus sp. (strain ATCC 27144 / PCC 6301 / SAUG 1402/1) (Anacystis nidulans).